Consider the following 1157-residue polypeptide: Folliculin-interacting protein 1 (1157 aa).

One can recognise a uDENN FNIP1/2-type domain in the interval 37–467 (FDPSQIRLIV…TVMPNGQPPI (431 aa)). Disordered stretches follow at residues 92 to 120 (PGGDSSSSLDSSINSSSSFSDAKEQCPKY), 616 to 665 (SQQE…TKVE), 769 to 796 (SPPTAEEGVSADQNCEAKQTVEDQNRDC), and 904 to 955 (VPHG…NYYG). Residues 95-111 (DSSSSLDSSINSSSSFS) are compositionally biased toward low complexity. Positions 475-1083 (SSQSVDMLAK…VSNLLHSTLQ (609 aa)) constitute a cDENN FNIP1/2-type domain. Over residues 651 to 664 (ADGHQPRTCQDTKV) the composition is skewed to basic and acidic residues. Over residues 904-916 (VPHGDRENAEKKV) the composition is skewed to basic and acidic residues. One can recognise a dDENN FNIP1/2-type domain in the interval 1093 to 1148 (FCVMHLEDRLQELYFKSKMLSEYLKGQMRVHVKELGVVLGIESSDLPLLAAVASTH).

This sequence belongs to the FNIP family. Homodimer and homomultimer. Heterodimer and heteromultimer with FNIP2. Component of the lysosomal folliculin complex (LFC).

It is found in the lysosome membrane. It localises to the cytoplasm. The protein resides in the cytosol. Functionally, binding partner of the GTPase-activating protein FLCN: involved in the cellular response to amino acid availability by regulating the non-canonical mTORC1 signaling cascade controlling the MiT/TFE factors TFEB and TFE3. Required to promote FLCN recruitment to lysosomes and interaction with Rag GTPases, leading to activation of the non-canonical mTORC1 signaling. In low-amino acid conditions, component of the lysosomal folliculin complex (LFC) on the membrane of lysosomes, which inhibits the GTPase-activating activity of FLCN, thereby inactivating mTORC1 and promoting nuclear translocation of TFEB and TFE3. Upon amino acid restimulation, disassembly of the LFC complex liberates the GTPase-activating activity of FLCN, leading to activation of mTORC1 and subsequent inactivation of TFEB and TFE3. In addition to its role in mTORC1 signaling, also acts as a co-chaperone of HSP90AA1/Hsp90: inhibits the ATPase activity of HSP90AA1/Hsp90, leading to activate both kinase and non-kinase client proteins of HSP90AA1/Hsp90. Acts as a scaffold to load client protein FLCN onto HSP90AA1/Hsp90. The polypeptide is Folliculin-interacting protein 1 (Gallus gallus (Chicken)).